Reading from the N-terminus, the 472-residue chain is 3-isopropylmalate dehydratase large subunit (472 aa).

The [4Fe-4S] cluster site is built by C349, C409, and C412.

This sequence belongs to the aconitase/IPM isomerase family. LeuC type 1 subfamily. Heterodimer of LeuC and LeuD. The cofactor is [4Fe-4S] cluster.

It catalyses the reaction (2R,3S)-3-isopropylmalate = (2S)-2-isopropylmalate. It participates in amino-acid biosynthesis; L-leucine biosynthesis; L-leucine from 3-methyl-2-oxobutanoate: step 2/4. Functionally, catalyzes the isomerization between 2-isopropylmalate and 3-isopropylmalate, via the formation of 2-isopropylmaleate. This Rhodospirillum rubrum (strain ATCC 11170 / ATH 1.1.1 / DSM 467 / LMG 4362 / NCIMB 8255 / S1) protein is 3-isopropylmalate dehydratase large subunit.